The sequence spans 490 residues: Limb region 1 protein homolog (490 aa).

At 1 to 19 the chain is on the extracellular side; it reads MEGQDEVSAREQHFHSQVR. A helical membrane pass occupies residues 20-40; it reads ESTICFLLFAILYVVSYFIIT. Over 41-62 the chain is Cytoplasmic; that stretch reads RYKRKSDEQEDEDAIVNRISLF. Residues 63–83 form a helical membrane-spanning segment; it reads LSTFTLAVSAGAVLLLPFSII. Residues 84–110 lie on the Extracellular side of the membrane; sequence SNEILLSFPQNYYIQWLNGSLIHGLWN. A helical membrane pass occupies residues 111–131; that stretch reads LASLFSNLCLFVLMPFAFFFL. Topologically, residues 132–151 are cytoplasmic; the sequence is ESEGFAGLKKGIRARILETL. Residues 152 to 172 traverse the membrane as a helical segment; the sequence is VMLLLLALLILGIVWVASALI. Residues 173–187 lie on the Extracellular side of the membrane; the sequence is DNDAASMESLYDLWE. The chain crosses the membrane as a helical span at residues 188–208; the sequence is FYLPYLYSCISLMGCLLLLLC. Residues 209–291 are Cytoplasmic-facing; the sequence is TPVGLSRMFT…RKKASAWERN (83 aa). Residues 250–287 are a coiled coil; the sequence is RLNGLSSSVEYNIMELEQELENVKTLKTKLERRKKASA. Residues 292-312 traverse the membrane as a helical segment; the sequence is LVYPAVMVLLLIETSISVLLV. Over 313 to 339 the chain is Extracellular; sequence ACNILCLLVDETAMPKGTRGPGIGNAS. Residues 340-360 traverse the membrane as a helical segment; sequence LSTFGFVGAALEIILIFYLMV. Topologically, residues 361 to 383 are cytoplasmic; it reads SSVVGFYSLRFFGNFTPKKDDTT. Residues 384–404 form a helical membrane-spanning segment; that stretch reads MTKIIGNCVSILVLSSALPVM. Residues 405–426 are Extracellular-facing; the sequence is SRTLGITRFDLLGDFGRFNWLG. The helical transmembrane segment at 427–447 threads the bilayer; it reads NFYIVLSYNLLFAIVTTLCLV. Residues 448–490 lie on the Cytoplasmic side of the membrane; that stretch reads RKFTSAVREELFKALGLHKLHLPNTSRDSETAKPSVNGHQKAL.

The protein belongs to the LIMR family. As to expression, widely expressed with strongest expression in heart and pancreas.

It localises to the membrane. Its function is as follows. Putative membrane receptor. In Homo sapiens (Human), this protein is Limb region 1 protein homolog (LMBR1).